The sequence spans 656 residues: Vi polysaccharide export protein VexE (656 aa).

Functionally, may be involved in translocation of the Vi antigen. The sequence is that of Vi polysaccharide export protein VexE (vexE) from Salmonella typhi.